The primary structure comprises 35 residues: Photosystem II reaction center protein Psb30 (35 aa).

A helical membrane pass occupies residues 6 to 26; the sequence is VIVQLVFLALIITTGPVIIVY.

Belongs to the Psb30/Ycf12 family. As to quaternary structure, PSII is composed of 1 copy each of membrane proteins PsbA, PsbB, PsbC, PsbD, PsbE, PsbF, PsbH, PsbI, PsbJ, PsbK, PsbL, PsbM, PsbT, PsbY, PsbZ, Psb30/Ycf12, peripheral proteins of the oxygen-evolving complex and a large number of cofactors. It forms dimeric complexes.

It is found in the plastid. It localises to the chloroplast thylakoid membrane. Its function is as follows. A core subunit of photosystem II (PSII), probably helps stabilize the reaction center. The polypeptide is Photosystem II reaction center protein Psb30 (Cyanidium caldarium (Red alga)).